The chain runs to 158 residues: Histone H2B.1 (158 aa).

Residues Lys7 and Lys25 each carry the N6-acetyllysine modification. 2 disordered regions span residues 26–45 and 135–158; these read AAAG…PKKG and VHNF…GQQT. Over residues 135-144 the composition is skewed to basic and acidic residues; the sequence is VHNFESETSK. Residues 147 to 158 are compositionally biased toward basic residues; it reads SQGRKRGRGQQT.

Belongs to the histone H2B family. In terms of assembly, the nucleosome is a histone octamer containing two molecules each of H2A, H2B, H3 and H4 assembled in one H3-H4 heterotetramer and two H2A-H2B heterodimers. The octamer wraps approximately 147 bp of DNA. Can be acetylated to form H2BK6ac and H2BK33ac. Expressed in the generative cell within the bicellular pollen. Not detected in other reproductive or vegetative tissues.

Its subcellular location is the nucleus. It localises to the chromosome. Functionally, core component of nucleosome. Nucleosomes wrap and compact DNA into chromatin, limiting DNA accessibility to the cellular machineries which require DNA as a template. Histones thereby play a central role in transcription regulation, DNA repair, DNA replication and chromosomal stability. DNA accessibility is regulated via a complex set of post-translational modifications of histones, also called histone code, and nucleosome remodeling. The chain is Histone H2B.1 from Lilium longiflorum (Trumpet lily).